The following is a 142-amino-acid chain: Large ribosomal subunit protein uL13 (142 aa).

It belongs to the universal ribosomal protein uL13 family. As to quaternary structure, part of the 50S ribosomal subunit.

In terms of biological role, this protein is one of the early assembly proteins of the 50S ribosomal subunit, although it is not seen to bind rRNA by itself. It is important during the early stages of 50S assembly. The sequence is that of Large ribosomal subunit protein uL13 from Marinomonas sp. (strain MWYL1).